We begin with the raw amino-acid sequence, 399 residues long: Elongation factor Tu (399 aa).

The region spanning 10–204 is the tr-type G domain; the sequence is KPHVNIGTIG…AVDASIPEPE (195 aa). The segment at 19–26 is G1; the sequence is GHVDHGKT. 19-26 provides a ligand contact to GTP; sequence GHVDHGKT. T26 is a Mg(2+) binding site. The tract at residues 60–64 is G2; the sequence is GITIN. A G3 region spans residues 81–84; sequence DCPG. Residues 81–85 and 136–139 each bind GTP; these read DCPGH and NKCD. The tract at residues 136-139 is G4; sequence NKCD. The segment at 174 to 176 is G5; that stretch reads SGL.

It belongs to the TRAFAC class translation factor GTPase superfamily. Classic translation factor GTPase family. EF-Tu/EF-1A subfamily. As to quaternary structure, monomer.

It is found in the cytoplasm. The catalysed reaction is GTP + H2O = GDP + phosphate + H(+). Functionally, GTP hydrolase that promotes the GTP-dependent binding of aminoacyl-tRNA to the A-site of ribosomes during protein biosynthesis. The chain is Elongation factor Tu from Synechococcus sp. (strain CC9902).